Reading from the N-terminus, the 802-residue chain is Bifunctional purine biosynthetic protein ADE5,7 (802 aa).

The tract at residues 1–450 (MLNILVLGNG…QNSESSKVAI (450 aa)) is GARS. The 217-residue stretch at 114-330 (KRFMSKHNIP…LAQVFLAAAE (217 aa)) folds into the ATP-grasp domain. 141–203 (QAHTDKAFVI…EQFLEGDEIS (63 aa)) is a binding site for ATP. Mg(2+) is bound by residues Glu-298 and Asn-300. The interval 451–802 (TYADSGVSVD…CVIENGTKLY (352 aa)) is AIRS. Ser-455 and Ser-458 each carry phosphoserine.

In the N-terminal section; belongs to the GARS family. The protein in the C-terminal section; belongs to the AIR synthase family. Mg(2+) is required as a cofactor. It depends on Mn(2+) as a cofactor.

It is found in the cytoplasm. It carries out the reaction 5-phospho-beta-D-ribosylamine + glycine + ATP = N(1)-(5-phospho-beta-D-ribosyl)glycinamide + ADP + phosphate + H(+). The catalysed reaction is 2-formamido-N(1)-(5-O-phospho-beta-D-ribosyl)acetamidine + ATP = 5-amino-1-(5-phospho-beta-D-ribosyl)imidazole + ADP + phosphate + H(+). Its pathway is purine metabolism; IMP biosynthesis via de novo pathway; 5-amino-1-(5-phospho-D-ribosyl)imidazole from N(2)-formyl-N(1)-(5-phospho-D-ribosyl)glycinamide: step 2/2. It functions in the pathway purine metabolism; IMP biosynthesis via de novo pathway; N(1)-(5-phospho-D-ribosyl)glycinamide from 5-phospho-alpha-D-ribose 1-diphosphate: step 2/2. In terms of biological role, catalyzes the second and fifth step in the 'de novo' purine biosynthesis pathway; contains phosphoribosylamine--glycine ligase (GARS) and phosphoribosylformylglycinamidine cyclo-ligase (AIRS) activities. In Saccharomyces cerevisiae (strain ATCC 204508 / S288c) (Baker's yeast), this protein is Bifunctional purine biosynthetic protein ADE5,7.